Here is a 105-residue protein sequence, read N- to C-terminus: uncharacterized protein (105 aa).

Residues 81 to 105 (NNNNKTITVDNNNNNNNNNNNNNNK) are disordered.

This is an uncharacterized protein from Dictyostelium discoideum (Social amoeba).